The chain runs to 423 residues: O-methyltransferase aoiF (423 aa).

Residue D273 coordinates S-adenosyl-L-methionine. The active-site Proton acceptor is H324.

It belongs to the class I-like SAM-binding methyltransferase superfamily. Cation-independent O-methyltransferase family.

It participates in secondary metabolite biosynthesis. In terms of biological role, O-methyltransferase; part of the gene cluster that mediates the biosynthesis of a methylated derivative of known natural products orthosporin and diaporthin. Within the pathway, aoiF catalyzes the biotransformation of orthosporin to diaporthin but also of diaporthin to the final product, by performing a tandem methylation of the polyketide core. Orthosporin is produced by an oxidoreductase that has still to be identified and that catalyzes the stereospecific reduction of the carbonyl moiety of the hexaketide isocoumarin scaffold produced by the non-reducing polyketide synthase aoiG to generate the S-configured secondary alcohol at C-11. The protein is O-methyltransferase aoiF of Aspergillus oryzae (strain ATCC 42149 / RIB 40) (Yellow koji mold).